The following is a 708-amino-acid chain: Glycine--tRNA ligase beta subunit (708 aa).

This sequence belongs to the class-II aminoacyl-tRNA synthetase family. As to quaternary structure, tetramer of two alpha and two beta subunits.

It is found in the cytoplasm. It carries out the reaction tRNA(Gly) + glycine + ATP = glycyl-tRNA(Gly) + AMP + diphosphate. This is Glycine--tRNA ligase beta subunit from Methylobacillus flagellatus (strain ATCC 51484 / DSM 6875 / VKM B-1610 / KT).